The sequence spans 2364 residues: Actin-binding protein F (2364 aa).

Low complexity predominate over residues 138–157 (THQTSPTTETTTTPSSSSSS). 4 disordered regions span residues 138 to 168 (THQTSPTTETTTTPSSSSSSSHDDKSESTLD), 1087 to 1111 (QASKYNESEVKDEKSMRNRQVEKRR), 1412 to 1435 (NNNSNNNNNTTNSNSFGDAKRAPM), and 1929 to 2088 (KLIS…SEFN). The segment covering 1092 to 1111 (NESEVKDEKSMRNRQVEKRR) has biased composition (basic and acidic residues). Low complexity-rich tracts occupy residues 1412-1428 (NNNSNNNNNTTNSNSFG) and 1932-1960 (SSSTTTDSKSTHSSVISSSSSSNLSTTTD). The stretch at 1960–2017 (DSSKDKKKLEKEEKQREKERKQKEKEDKKREKEELKKKEKEEKKKKEEEKKLKKKSGS) forms a coiled coil. Residues 1961–2010 (SSKDKKKLEKEEKQREKERKQKEKEDKKREKEELKKKEKEEKKKKEEEKK) show a composition bias toward basic and acidic residues. Positions 2027–2047 (ATPTTTTTTEATTTTTTTTAT) are enriched in low complexity. Residues 2052 to 2070 (IKPEKIASDDEHDDHHHDE) are compositionally biased toward basic and acidic residues. The span at 2071-2081 (HDEEDDDDEPL) shows a compositional bias: acidic residues. Residues 2129-2173 (VQRWNSLFKDLRNKVDQVSNKDSVEIDYEKEIDRERRQNKMASNE) adopt a coiled-coil conformation.

As to quaternary structure, interacts with actin.

It localises to the nucleus. The protein resides in the cytoplasm. It is found in the cytoskeleton. This is Actin-binding protein F (abpF) from Dictyostelium discoideum (Social amoeba).